The chain runs to 384 residues: Early estrogen-induced gene 1 protein (384 aa).

The 144-residue stretch at 2-145 (AFLMKKKKFK…ILKVTIGMFL (144 aa)) folds into the C2 NT-type domain. Residues 129 to 138 (NTRQDNSILK) form a required for interaction with TNFRSF11A/RANK region. Residues 173-315 (LTCKGGGTSS…RRKKDSVESH (143 aa)) are disordered. Low complexity predominate over residues 183-193 (GGSSTNSLTGS). Positions 227–254 (SRNSSYASQQSKISGYSTEHSRSSSLSD) are enriched in polar residues. Composition is skewed to basic and acidic residues over residues 280–292 (GSER…EKPP) and 299–315 (HLSD…VESH).

Belongs to the EEIG family. Part of a complex composed of EEIG1, TNFRSF11A/RANK, PLCG2, GAB2, TEC and BTK; complex formation increases in the presence of TNFSF11/RANKL. Interacts with PRDM1/BLIMP1; following TNFSF11/RANKL stimulation in bone marrow-derived macrophages, the interaction promotes the binding of PRDM1/BLIMP1 to the gene promoter of IRF8.

It is found in the nucleus. It localises to the cytoplasm. Its subcellular location is the membrane raft. Key component of TNFSF11/RANKL- and TNF-induced osteoclastogenesis pathways, thereby mediates bone resorption in pathological bone loss conditions. Required for TNFSF11/RANKL-induced osteoclastogenesis via its interaction with TNFRSF11A/RANK, thereby facilitates the downsteam transcription of NFATC1 and activation of PLCG2. Facilitates recruitment of the transcriptional repressor PRDM1/BLIMP1 to the promoter of the anti-osteoclastogenesis gene IRF8, thereby resulting in transcription of osteoclast differentiation factors. May play a role in estrogen action. The protein is Early estrogen-induced gene 1 protein of Homo sapiens (Human).